A 169-amino-acid chain; its full sequence is Ureidoglycolate lyase (169 aa).

This sequence belongs to the ureidoglycolate lyase family. Homodimer. Ni(2+) serves as cofactor.

The enzyme catalyses (S)-ureidoglycolate = urea + glyoxylate. It functions in the pathway nitrogen metabolism; (S)-allantoin degradation. Functionally, catalyzes the catabolism of the allantoin degradation intermediate (S)-ureidoglycolate, generating urea and glyoxylate. Involved in the utilization of allantoin as nitrogen source. This Brucella abortus biovar 1 (strain 9-941) protein is Ureidoglycolate lyase.